Here is a 458-residue protein sequence, read N- to C-terminus: Mannan endo-1,6-alpha-mannosidase DFG5 (458 aa).

The signal sequence occupies residues 1–26; it reads MIVNISAKMILSICFTFLSFFKATHA. N-linked (GlcNAc...) asparagine glycosylation is found at Asn-89, Asn-114, Asn-138, Asn-208, Asn-231, Asn-245, Asn-270, Asn-273, and Asn-417. A disordered region spans residues 399-418; sequence PYKEDNGGTSKGDANAGMNS. Gly-437 is lipidated: GPI-anchor amidated glycine. Positions 438–458 are cleaved as a propeptide — removed in mature form; that stretch reads AAIITAVILSVLTGGAVWMLF.

This sequence belongs to the glycosyl hydrolase 76 family. Post-translationally, N-glycosylated.

The protein localises to the cell membrane. It catalyses the reaction Random hydrolysis of (1-&gt;6)-alpha-D-mannosidic linkages in unbranched (1-&gt;6)-mannans.. Functionally, required for normal synthesis of the cell wall. This chain is Mannan endo-1,6-alpha-mannosidase DFG5 (DFG5), found in Saccharomyces cerevisiae (strain ATCC 204508 / S288c) (Baker's yeast).